The primary structure comprises 509 residues: ATP synthase subunit alpha (509 aa).

169–176 (GDRQTGKT) lines the ATP pocket.

This sequence belongs to the ATPase alpha/beta chains family. F-type ATPases have 2 components, CF(1) - the catalytic core - and CF(0) - the membrane proton channel. CF(1) has five subunits: alpha(3), beta(3), gamma(1), delta(1), epsilon(1). CF(0) has three main subunits: a(1), b(2) and c(9-12). The alpha and beta chains form an alternating ring which encloses part of the gamma chain. CF(1) is attached to CF(0) by a central stalk formed by the gamma and epsilon chains, while a peripheral stalk is formed by the delta and b chains.

It localises to the cell inner membrane. It carries out the reaction ATP + H2O + 4 H(+)(in) = ADP + phosphate + 5 H(+)(out). Functionally, produces ATP from ADP in the presence of a proton gradient across the membrane. The alpha chain is a regulatory subunit. This chain is ATP synthase subunit alpha, found in Brucella anthropi (strain ATCC 49188 / DSM 6882 / CCUG 24695 / JCM 21032 / LMG 3331 / NBRC 15819 / NCTC 12168 / Alc 37) (Ochrobactrum anthropi).